Reading from the N-terminus, the 328-residue chain is Twinfilin (328 aa).

In terms of domain architecture, ADF-H 1 spans 1 to 137 (MSASVELKPT…DYQQIMKSLS (137 aa)). A Phosphoserine modification is found at Ser-143. In terms of domain architecture, ADF-H 2 spans 173 to 304 (GVAMSIDDKA…TEKEILHAAG (132 aa)). The tract at residues 302 to 328 (AAGISSPQAETSTTKTGFSRPRPPRRR) is disordered. Polar residues predominate over residues 306–318 (SSPQAETSTTKTG).

This sequence belongs to the actin-binding proteins ADF family. Twinfilin subfamily. As to quaternary structure, interacts with G-actin; ADP-actin form.

It is found in the cytoplasm. The protein localises to the cytoskeleton. Functionally, actin-binding protein involved in motile and morphological processes. Inhibits actin polymerization, likely by sequestering G-actin. Prevents actin filament assembly by forming a 1:1 complex with actin monomers, and inhibits the nucleotide exchange reaction of actin monomers. The protein is Twinfilin (twf1) of Schizosaccharomyces pombe (strain 972 / ATCC 24843) (Fission yeast).